Here is a 359-residue protein sequence, read N- to C-terminus: Probable cinnamyl alcohol dehydrogenase 8A (359 aa).

Cys45 lines the Zn(2+) pocket. Residue Thr47 participates in NADP(+) binding. Zn(2+)-binding residues include His67, Glu68, Cys98, Cys101, Cys104, Cys112, and Cys161. NADP(+) contacts are provided by residues Thr165, 186–191, 209–214, Thr249, Gly273, and 296–298; these read GLGGLG, SSSPAK, and SGG.

This sequence belongs to the zinc-containing alcohol dehydrogenase family. Homodimer. Zn(2+) is required as a cofactor.

It carries out the reaction (E)-cinnamyl alcohol + NADP(+) = (E)-cinnamaldehyde + NADPH + H(+). The catalysed reaction is (E)-coniferol + NADP(+) = (E)-coniferaldehyde + NADPH + H(+). It catalyses the reaction (E)-sinapyl alcohol + NADP(+) = (E)-sinapaldehyde + NADPH + H(+). The enzyme catalyses (E)-4-coumaroyl alcohol + NADP(+) = (E)-4-coumaraldehyde + NADPH + H(+). It carries out the reaction (E)-caffeyl alcohol + NADP(+) = (E)-caffeyl aldehyde + NADPH + H(+). It functions in the pathway aromatic compound metabolism; phenylpropanoid biosynthesis. Its function is as follows. Involved in lignin biosynthesis. Catalyzes the final step specific for the production of lignin monomers. Catalyzes the NADPH-dependent reduction of coniferaldehyde, 5-hydroxyconiferaldehyde, sinapaldehyde, 4-coumaraldehyde and caffeyl aldehyde to their respective alcohols. The sequence is that of Probable cinnamyl alcohol dehydrogenase 8A from Oryza sativa subsp. japonica (Rice).